The chain runs to 526 residues: Arylsulfatase G (526 aa).

The first 16 residues, 1-16, serve as a signal peptide directing secretion; that stretch reads MGWLFLKVLLVGMVFS. Ca(2+)-binding residues include aspartate 44, aspartate 45, and cysteine 84. The Nucleophile role is filled by cysteine 84. A 3-oxoalanine (Cys) modification is found at cysteine 84. N-linked (GlcNAc...) asparagine glycosylation occurs at asparagine 117. A substrate-binding site is contributed by lysine 137. Residue histidine 139 is part of the active site. Serine 162 provides a ligand contact to substrate. Asparagine 215 carries N-linked (GlcNAc...) asparagine glycosylation. Histidine 251 contacts substrate. Ca(2+) is bound by residues aspartate 302 and asparagine 303. 2 N-linked (GlcNAc...) asparagine glycosylation sites follow: asparagine 356 and asparagine 497.

The protein belongs to the sulfatase family. It depends on Ca(2+) as a cofactor. Post-translationally, N-glycosylated with both high mannose and complex type sugars. In terms of processing, the conversion to 3-oxoalanine (also known as C-formylglycine, FGly), of a serine or cysteine residue in prokaryotes and of a cysteine residue in eukaryotes, is critical for catalytic activity. 63-kDa precursor undergoes proteolytic processing in two steps, yielding two fragments in the first step (apparent molecular masses of 44 and 18 kDa). In the second step, the 44-kDa fragment is processed further to the 34- and 10-kDa chains. The 10-kDa chain is a cleavage product of the 44-kDa fragment but linked to the 18-kDa chain through a disulfide bridge.

It is found in the lysosome. It catalyses the reaction an aryl sulfate + H2O = a phenol + sulfate + H(+). It carries out the reaction Hydrolysis of the 3-sulfate groups of the N-sulfo-D-glucosamine 3-O-sulfate units of heparin.. Functionally, displays arylsulfatase activity at acidic pH towards the artificial substrate p-nitrocatechol sulfate. Catalyzes the hydrolysis of the 3-sulfate groups of the N-sulfo-D-glucosamine 3-O-sulfate units of heparin. The sequence is that of Arylsulfatase G (Arsg) from Rattus norvegicus (Rat).